The sequence spans 361 residues: 3-dehydroquinate synthase (361 aa).

NAD(+)-binding positions include 73-78 (DAEAGK), 107-111 (GAATD), 131-132 (TT), K144, K153, and 171-174 (TLET). 3 residues coordinate Zn(2+): E186, H249, and H265.

The protein belongs to the sugar phosphate cyclases superfamily. Dehydroquinate synthase family. NAD(+) is required as a cofactor. Requires Co(2+) as cofactor. The cofactor is Zn(2+).

The protein resides in the cytoplasm. The enzyme catalyses 7-phospho-2-dehydro-3-deoxy-D-arabino-heptonate = 3-dehydroquinate + phosphate. Its pathway is metabolic intermediate biosynthesis; chorismate biosynthesis; chorismate from D-erythrose 4-phosphate and phosphoenolpyruvate: step 2/7. In terms of biological role, catalyzes the conversion of 3-deoxy-D-arabino-heptulosonate 7-phosphate (DAHP) to dehydroquinate (DHQ). This Mycobacterium leprae (strain TN) protein is 3-dehydroquinate synthase.